A 277-amino-acid chain; its full sequence is Energy-coupling factor transporter ATP-binding protein EcfA1 (277 aa).

The ABC transporter domain occupies 5–240 (LEVENLVFKY…SEDMVEIGLD (236 aa)). 40–47 (GQNGSGKS) lines the ATP pocket. Glutamate 166 acts as the Proton acceptor in catalysis.

This sequence belongs to the ABC transporter superfamily. Energy-coupling factor EcfA family. Forms a stable energy-coupling factor (ECF) transporter complex composed of 2 membrane-embedded substrate-binding proteins (S component), 2 ATP-binding proteins (A component) and 2 transmembrane proteins (T component). In L.lactis forms a stable complex with EcfA' and EcfT and substrate-binding components. In E.coli forms a stable complex with EcfA', EcfT and individually with 3 tested substrate-binding components (BioY, NiaX and ThiT) with a stoichiometry of 1.1:1:1. The core ECF complex interacts with a number of substrate-specific binding components, including BioY, BioY2, HmpT, NiaX, PanT, QueT, RibU and ThiT.

It localises to the cell membrane. ATP-binding (A) component of a common energy-coupling factor (ECF) ABC-transporter complex. Unlike classic ABC transporters this ECF transporter provides the energy necessary to transport a number of different substrates. In this organism these probably include biotin, thiamine precursor, niacin, pantothenic acid, queuosine precursor, riboflavin and thiamine. Uptake of niacin or riboflavin into proteosomes containing EcfA1A2T and Niax or RibU has been demonstrated. Uptake requires hydrolyzable Mg-ATP and is substrate-specific; NiaX-containing proteosomes did not transport riboflavin. The polypeptide is Energy-coupling factor transporter ATP-binding protein EcfA1 (Lactococcus lactis subsp. cremoris (strain MG1363)).